Consider the following 101-residue polypeptide: Urease subunit beta (101 aa).

It belongs to the urease beta subunit family. In terms of assembly, heterotrimer of UreA (gamma), UreB (beta) and UreC (alpha) subunits. Three heterotrimers associate to form the active enzyme.

The protein localises to the cytoplasm. It carries out the reaction urea + 2 H2O + H(+) = hydrogencarbonate + 2 NH4(+). It participates in nitrogen metabolism; urea degradation; CO(2) and NH(3) from urea (urease route): step 1/1. The chain is Urease subunit beta from Burkholderia ambifaria (strain MC40-6).